The following is a 477-amino-acid chain: Ribulose bisphosphate carboxylase large chain (477 aa).

Positions 1–2 (MS) are excised as a propeptide. An N-acetylproline modification is found at proline 3. At lysine 14 the chain carries N6,N6,N6-trimethyllysine. Substrate is bound by residues asparagine 123 and threonine 173. Lysine 175 (proton acceptor) is an active-site residue. Substrate is bound at residue lysine 177. The Mg(2+) site is built by lysine 201, aspartate 203, and glutamate 204. N6-carboxylysine is present on lysine 201. Histidine 294 functions as the Proton acceptor in the catalytic mechanism. 3 residues coordinate substrate: arginine 295, histidine 327, and serine 379.

Belongs to the RuBisCO large chain family. Type I subfamily. In terms of assembly, heterohexadecamer of 8 large chains and 8 small chains; disulfide-linked. The disulfide link is formed within the large subunit homodimers. Requires Mg(2+) as cofactor. The disulfide bond which can form in the large chain dimeric partners within the hexadecamer appears to be associated with oxidative stress and protein turnover.

The protein localises to the plastid. Its subcellular location is the chloroplast. It carries out the reaction 2 (2R)-3-phosphoglycerate + 2 H(+) = D-ribulose 1,5-bisphosphate + CO2 + H2O. The catalysed reaction is D-ribulose 1,5-bisphosphate + O2 = 2-phosphoglycolate + (2R)-3-phosphoglycerate + 2 H(+). In terms of biological role, ruBisCO catalyzes two reactions: the carboxylation of D-ribulose 1,5-bisphosphate, the primary event in carbon dioxide fixation, as well as the oxidative fragmentation of the pentose substrate in the photorespiration process. Both reactions occur simultaneously and in competition at the same active site. The polypeptide is Ribulose bisphosphate carboxylase large chain (Solanum bulbocastanum (Wild potato)).